Consider the following 286-residue polypeptide: 33 kDa chaperonin (286 aa).

Cystine bridges form between Cys-225-Cys-227 and Cys-258-Cys-261.

Belongs to the HSP33 family. In terms of processing, under oxidizing conditions two disulfide bonds are formed involving the reactive cysteines. Under reducing conditions zinc is bound to the reactive cysteines and the protein is inactive.

Its subcellular location is the cytoplasm. Functionally, redox regulated molecular chaperone. Protects both thermally unfolding and oxidatively damaged proteins from irreversible aggregation. Plays an important role in the bacterial defense system toward oxidative stress. The chain is 33 kDa chaperonin from Shewanella baltica (strain OS223).